The sequence spans 100 residues: Putative antiporter subunit mnhF2 (100 aa).

3 helical membrane passes run Ile5–Leu25, Val38–Gly60, and Leu70–Phe92.

This sequence belongs to the CPA3 antiporters (TC 2.A.63) subunit F family. May form a heterooligomeric complex that consists of seven subunits: mnhA2, mnhB2, mnhC2, mnhD2, mnhE2, mnhF2 and mnhG2.

It localises to the cell membrane. The chain is Putative antiporter subunit mnhF2 (mnhF2) from Staphylococcus aureus (strain USA300).